Consider the following 500-residue polypeptide: Type-2 serine--tRNA ligase (500 aa).

L-serine is bound at residue alanine 305. Residue cysteine 307 participates in Zn(2+) binding. Residue arginine 337 participates in L-serine binding. ATP is bound by residues 337-339 and 348-349; these read RYE and RV. Residues 354–356 and glutamine 401 contribute to the L-serine site; that span reads RIE. Glutamate 356 contacts Zn(2+). Glutamate 430 lines the ATP pocket. Asparagine 433 lines the L-serine pocket. Cysteine 459 provides a ligand contact to Zn(2+). Arginine 466 is a binding site for ATP.

Belongs to the class-II aminoacyl-tRNA synthetase family. Type-2 seryl-tRNA synthetase subfamily. In terms of assembly, homodimer. The cofactor is Zn(2+).

The protein localises to the cytoplasm. The catalysed reaction is tRNA(Ser) + L-serine + ATP = L-seryl-tRNA(Ser) + AMP + diphosphate + H(+). The enzyme catalyses tRNA(Sec) + L-serine + ATP = L-seryl-tRNA(Sec) + AMP + diphosphate + H(+). Its pathway is aminoacyl-tRNA biosynthesis; selenocysteinyl-tRNA(Sec) biosynthesis; L-seryl-tRNA(Sec) from L-serine and tRNA(Sec): step 1/1. Its function is as follows. Catalyzes the attachment of serine to tRNA(Ser). Is also able to aminoacylate tRNA(Sec) with serine, to form the misacylated tRNA L-seryl-tRNA(Sec), which will be further converted into selenocysteinyl-tRNA(Sec). The chain is Type-2 serine--tRNA ligase from Methanothrix thermoacetophila (strain DSM 6194 / JCM 14653 / NBRC 101360 / PT) (Methanosaeta thermophila).